Reading from the N-terminus, the 99-residue chain is UPF0213 protein SP_1535 (99 aa).

The GIY-YIG domain occupies 3-78 (HKAYMYVLEC…KRKKRPQKEE (76 aa)).

The protein belongs to the UPF0213 family.

In Streptococcus pneumoniae serotype 4 (strain ATCC BAA-334 / TIGR4), this protein is UPF0213 protein SP_1535.